We begin with the raw amino-acid sequence, 101 residues long: Small ribosomal subunit protein uS14 (101 aa).

Belongs to the universal ribosomal protein uS14 family. As to quaternary structure, part of the 30S ribosomal subunit. Contacts proteins S3 and S10.

Binds 16S rRNA, required for the assembly of 30S particles and may also be responsible for determining the conformation of the 16S rRNA at the A site. This chain is Small ribosomal subunit protein uS14, found in Opitutus terrae (strain DSM 11246 / JCM 15787 / PB90-1).